The sequence spans 142 residues: COA8 family protein Y39B6A.34, mitochondrial (142 aa).

It belongs to the COA8 family.

It localises to the mitochondrion inner membrane. Functionally, may be required for cytochrome c complex (COX) assembly and function, COX being the terminal component of the mitochondrial respiratory chain. The protein is COA8 family protein Y39B6A.34, mitochondrial of Caenorhabditis elegans.